Consider the following 290-residue polypeptide: Probable protein phosphatase 2C 20 (290 aa).

Residues 31–278 form the PPM-type phosphatase domain; that stretch reads AHGYDFVKGK…DDISCIVPCF (248 aa). Positions 68, 69, 230, and 269 each coordinate Mn(2+).

The protein belongs to the PP2C family. It depends on Mg(2+) as a cofactor. Mn(2+) is required as a cofactor.

The enzyme catalyses O-phospho-L-seryl-[protein] + H2O = L-seryl-[protein] + phosphate. It catalyses the reaction O-phospho-L-threonyl-[protein] + H2O = L-threonyl-[protein] + phosphate. Its function is as follows. May be involved in defense signaling. The protein is Probable protein phosphatase 2C 20 (PPC3-1.2) of Arabidopsis thaliana (Mouse-ear cress).